Reading from the N-terminus, the 682-residue chain is 1,4-alpha-glucan-branching enzyme (682 aa).

Residues Trp88 and Lys124 each coordinate (1,4-alpha-D-glucosyl)n. The active-site Nucleophile is Asp342. Residue Glu397 is the Proton donor of the active site.

The protein belongs to the glycosyl hydrolase 13 family. GlgB subfamily.

It is found in the cytoplasm. The enzyme catalyses Transfers a segment of a (1-&gt;4)-alpha-D-glucan chain to a primary hydroxy group in a similar glucan chain.. The protein operates within glycan biosynthesis; glycogen biosynthesis. In terms of biological role, glycogen-branching enzyme participates in the glycogen biosynthetic process along with glycogenin and glycogen synthase. Generates alpha-1,6-glucosidic branches from alpha-1,4-linked glucose chains, to increase solubility of the glycogen polymer. In Cryptococcus neoformans var. grubii serotype A (strain H99 / ATCC 208821 / CBS 10515 / FGSC 9487) (Filobasidiella neoformans var. grubii), this protein is 1,4-alpha-glucan-branching enzyme.